A 141-amino-acid polypeptide reads, in one-letter code: Globin, extracellular monomeric (141 aa).

Residues 1-141 (ECDALQRFKV…LGVITGAIHD (141 aa)) form the Globin domain. A disulfide bond links cysteine 2 and cysteine 131. Histidine 94 serves as a coordination point for heme b.

This sequence belongs to the globin family. In terms of assembly, the giant hemoglobins of worms are formed of a monomeric subunit and a disulfide-bonded trimer. This subunit is monomeric.

It is found in the secreted. In Tubifex tubifex (Sludge worm), this protein is Globin, extracellular monomeric.